The sequence spans 308 residues: ADP,ATP carrier protein (308 aa).

Solcar repeat units follow at residues 6-99, 110-203, and 211-297; these read KNFM…FKRM, KWFA…LKPV, and NNFL…LQVI. Transmembrane regions (helical) follow at residues 8–35, 76–100, 108–128, 179–200, and 214–234; these read FMVD…VKLL, TANV…KRMF, YWKW…VSLS, FNIS…YDSL, and LAAF…SYPI. The ADP site is built by R81 and K93. R238 serves as a coordination point for ADP. Positions 238-243 are important for transport activity; the sequence is RRRMMM. The short motif at 238–243 is the Nucleotide carrier signature motif element; it reads RRRMMM. Residues 274-294 traverse the membrane as a helical segment; the sequence is AGANILRAVAGAGVLAGYDQL.

This sequence belongs to the mitochondrial carrier (TC 2.A.29) family. In terms of assembly, monomer.

Its subcellular location is the mitochondrion inner membrane. The enzyme catalyses ADP(in) + ATP(out) = ADP(out) + ATP(in). With respect to regulation, the matrix-open state (m-state) is inhibited by the membrane-permeable bongkrekic acid (BKA). The cytoplasmic-open state (c-state) is inhibited by the membrane-impermeable toxic inhibitor carboxyatractyloside (CATR). Functionally, ADP:ATP antiporter that mediates import of ADP into the mitochondrial matrix for ATP synthesis, and export of ATP out to fuel the cell. Cycles between the cytoplasmic-open state (c-state) and the matrix-open state (m-state): operates by the alternating access mechanism with a single substrate-binding site intermittently exposed to either the cytosolic (c-state) or matrix (m-state) side of the inner mitochondrial membrane. The polypeptide is ADP,ATP carrier protein (ABT) (Chlamydomonas reinhardtii (Chlamydomonas smithii)).